The sequence spans 350 residues: Biotin synthase (350 aa).

In terms of domain architecture, Radical SAM core spans 38–256; that stretch reads NHVQVSTLLS…IAVARIMMPK (219 aa). Positions 53, 57, and 60 each coordinate [4Fe-4S] cluster. [2Fe-2S] cluster contacts are provided by Cys97, Cys128, Cys188, and Arg260.

The protein belongs to the radical SAM superfamily. Biotin synthase family. Homodimer. It depends on [4Fe-4S] cluster as a cofactor. [2Fe-2S] cluster is required as a cofactor.

It carries out the reaction (4R,5S)-dethiobiotin + (sulfur carrier)-SH + 2 reduced [2Fe-2S]-[ferredoxin] + 2 S-adenosyl-L-methionine = (sulfur carrier)-H + biotin + 2 5'-deoxyadenosine + 2 L-methionine + 2 oxidized [2Fe-2S]-[ferredoxin]. Its pathway is cofactor biosynthesis; biotin biosynthesis; biotin from 7,8-diaminononanoate: step 2/2. Catalyzes the conversion of dethiobiotin (DTB) to biotin by the insertion of a sulfur atom into dethiobiotin via a radical-based mechanism. In Vibrio cholerae serotype O1 (strain ATCC 39541 / Classical Ogawa 395 / O395), this protein is Biotin synthase.